The chain runs to 312 residues: Malate dehydrogenase (312 aa).

NAD(+)-binding positions include 7–13 (GAAGGIG) and Asp-34. Arg-81 and Arg-87 together coordinate substrate. Residues Asn-94 and 117–119 (ITN) contribute to the NAD(+) site. Residues Asn-119 and Arg-153 each coordinate substrate. Residue His-177 is the Proton acceptor of the active site. Met-227 is an NAD(+) binding site.

Belongs to the LDH/MDH superfamily. MDH type 1 family. Homodimer.

It carries out the reaction (S)-malate + NAD(+) = oxaloacetate + NADH + H(+). In terms of biological role, catalyzes the reversible oxidation of malate to oxaloacetate. The chain is Malate dehydrogenase from Salmonella dublin (strain CT_02021853).